Here is a 242-residue protein sequence, read N- to C-terminus: tRNA (guanine-N(1)-)-methyltransferase (242 aa).

Residues glycine 111 and 130–135 (IGDYVL) contribute to the S-adenosyl-L-methionine site.

It belongs to the RNA methyltransferase TrmD family. In terms of assembly, homodimer.

It localises to the cytoplasm. It catalyses the reaction guanosine(37) in tRNA + S-adenosyl-L-methionine = N(1)-methylguanosine(37) in tRNA + S-adenosyl-L-homocysteine + H(+). Functionally, specifically methylates guanosine-37 in various tRNAs. The polypeptide is tRNA (guanine-N(1)-)-methyltransferase (Onion yellows phytoplasma (strain OY-M)).